The following is a 162-amino-acid chain: Regulator of ribonuclease activity A (162 aa).

The protein belongs to the RraA family. In terms of assembly, homotrimer. Binds to both RNA-binding sites in the C-terminal region of Rne and to RhlB.

The protein localises to the cytoplasm. Functionally, globally modulates RNA abundance by binding to RNase E (Rne) and regulating its endonucleolytic activity. Can modulate Rne action in a substrate-dependent manner by altering the composition of the degradosome. Modulates RNA-binding and helicase activities of the degradosome. The polypeptide is Regulator of ribonuclease activity A (Haemophilus influenzae (strain 86-028NP)).